The chain runs to 473 residues: Trehalose-6-phosphate synthase (473 aa).

Arg10 contacts D-glucose 6-phosphate. Residue 21 to 22 (GG) coordinates UDP-alpha-D-glucose. Tyr76 and Asp130 together coordinate D-glucose 6-phosphate. Residues Arg262 and Lys267 each coordinate UDP-alpha-D-glucose. Position 300 (Arg300) interacts with D-glucose 6-phosphate. UDP-alpha-D-glucose is bound by residues Phe339 and 365-369 (LVAKE). A disordered region spans residues 454–473 (TPRSPERQQQNNVATFPKLA).

It belongs to the glycosyltransferase 20 family. As to quaternary structure, homotetramer.

It catalyses the reaction D-glucose 6-phosphate + UDP-alpha-D-glucose = alpha,alpha-trehalose 6-phosphate + UDP + H(+). Its pathway is glycan biosynthesis; trehalose biosynthesis. Functionally, probably involved in the osmoprotection via the biosynthesis of trehalose. Catalyzes the transfer of glucose from UDP-alpha-D-glucose (UDP-Glc) to D-glucose 6-phosphate (Glc-6-P) to form trehalose-6-phosphate. Acts with retention of the anomeric configuration of the UDP-sugar donor. This chain is Trehalose-6-phosphate synthase, found in Salmonella choleraesuis (strain SC-B67).